A 189-amino-acid polypeptide reads, in one-letter code: uncharacterized protein (189 aa).

A signal peptide spans 1–19 (MKRVLFFLLMIFVSFGVIA).

This is an uncharacterized protein from Escherichia coli (strain K12).